The primary structure comprises 427 residues: Enolase (427 aa).

Residue Gln163 participates in (2R)-2-phosphoglycerate binding. Glu205 acts as the Proton donor in catalysis. Mg(2+) contacts are provided by Asp242, Glu285, and Asp312. (2R)-2-phosphoglycerate-binding residues include Lys337, Arg366, Ser367, and Lys388. Lys337 acts as the Proton acceptor in catalysis.

This sequence belongs to the enolase family. Mg(2+) is required as a cofactor.

It is found in the cytoplasm. Its subcellular location is the secreted. The protein resides in the cell surface. The enzyme catalyses (2R)-2-phosphoglycerate = phosphoenolpyruvate + H2O. It participates in carbohydrate degradation; glycolysis; pyruvate from D-glyceraldehyde 3-phosphate: step 4/5. Functionally, catalyzes the reversible conversion of 2-phosphoglycerate (2-PG) into phosphoenolpyruvate (PEP). It is essential for the degradation of carbohydrates via glycolysis. The polypeptide is Enolase (Burkholderia thailandensis (strain ATCC 700388 / DSM 13276 / CCUG 48851 / CIP 106301 / E264)).